The primary structure comprises 248 residues: ATP synthase subunit a, chloroplastic (248 aa).

The next 5 membrane-spanning stretches (helical) occupy residues 38-58 (QVLI…AIAV), 96-116 (VPFI…GALL), 135-155 (INTT…AGLT), 200-220 (LVVV…VMFL), and 221-241 (GLFT…AYIG).

This sequence belongs to the ATPase A chain family. As to quaternary structure, F-type ATPases have 2 components, CF(1) - the catalytic core - and CF(0) - the membrane proton channel. CF(1) has five subunits: alpha(3), beta(3), gamma(1), delta(1), epsilon(1). CF(0) has four main subunits: a, b, b' and c.

Its subcellular location is the plastid. It is found in the chloroplast thylakoid membrane. Its function is as follows. Key component of the proton channel; it plays a direct role in the translocation of protons across the membrane. This is ATP synthase subunit a, chloroplastic from Nuphar advena (Common spatterdock).